The following is a 438-amino-acid chain: Enolase (438 aa).

Substrate is bound by residues His-159 and Glu-168. Glu-211 acts as the Proton donor in catalysis. Mg(2+) contacts are provided by Asp-246, Glu-297, and Asp-322. Positions 297 and 322 each coordinate substrate. Lys-347 functions as the Proton acceptor in the catalytic mechanism. Residues 374 to 377 and Lys-398 each bind substrate; that span reads SHRS.

The protein belongs to the enolase family. Homodimer. Mg(2+) is required as a cofactor.

The protein localises to the cytoplasm. The enzyme catalyses (2R)-2-phosphoglycerate = phosphoenolpyruvate + H2O. Its pathway is carbohydrate degradation; glycolysis; pyruvate from D-glyceraldehyde 3-phosphate: step 4/5. The chain is Enolase (enoA) from Penicillium citrinum.